The chain runs to 124 residues: UPF0382 membrane protein HI_1073 (124 aa).

A run of 3 helical transmembrane segments spans residues 6–26, 70–90, and 95–115; these read LTLVALSGFFCVALGAFAAHG, SMSSWLIGILLFSGSLYALAF, and VIVWITPIGGTLFLIGWISLA.

It belongs to the UPF0382 family.

Its subcellular location is the cell membrane. This chain is UPF0382 membrane protein HI_1073, found in Haemophilus influenzae (strain ATCC 51907 / DSM 11121 / KW20 / Rd).